A 268-amino-acid chain; its full sequence is Undecaprenyl-diphosphatase (268 aa).

7 helical membrane-spanning segments follow: residues 5-25 (TIAQ…IPVS), 43-63 (GKAF…SVYA), 84-104 (LGIL…YQII), 107-127 (VLFE…IVLL), 184-204 (AAEF…AYDL), 214-234 (ADLQ…VLVV), and 247-267 (ALFG…VLVL).

This sequence belongs to the UppP family.

The protein localises to the cell inner membrane. It carries out the reaction di-trans,octa-cis-undecaprenyl diphosphate + H2O = di-trans,octa-cis-undecaprenyl phosphate + phosphate + H(+). Functionally, catalyzes the dephosphorylation of undecaprenyl diphosphate (UPP). Confers resistance to bacitracin. The protein is Undecaprenyl-diphosphatase of Chelativorans sp. (strain BNC1).